We begin with the raw amino-acid sequence, 329 residues long: Ribosomal RNA small subunit methyltransferase C (329 aa).

Belongs to the methyltransferase superfamily. RsmC family. In terms of assembly, monomer.

The protein resides in the cytoplasm. It catalyses the reaction guanosine(1207) in 16S rRNA + S-adenosyl-L-methionine = N(2)-methylguanosine(1207) in 16S rRNA + S-adenosyl-L-homocysteine + H(+). Specifically methylates the guanine in position 1207 of 16S rRNA in the 30S particle. This chain is Ribosomal RNA small subunit methyltransferase C, found in Haemophilus ducreyi (strain 35000HP / ATCC 700724).